A 208-amino-acid chain; its full sequence is Uracil phosphoribosyltransferase (208 aa).

5-phospho-alpha-D-ribose 1-diphosphate-binding positions include Arg-78, Arg-103, and 130 to 138 (DPMLATGGS). Residues Ile-193 and 198–200 (GDA) contribute to the uracil site. Asp-199 serves as a coordination point for 5-phospho-alpha-D-ribose 1-diphosphate.

The protein belongs to the UPRTase family. Mg(2+) is required as a cofactor.

The enzyme catalyses UMP + diphosphate = 5-phospho-alpha-D-ribose 1-diphosphate + uracil. Its pathway is pyrimidine metabolism; UMP biosynthesis via salvage pathway; UMP from uracil: step 1/1. Allosterically activated by GTP. Functionally, catalyzes the conversion of uracil and 5-phospho-alpha-D-ribose 1-diphosphate (PRPP) to UMP and diphosphate. The polypeptide is Uracil phosphoribosyltransferase (Acholeplasma laidlawii (strain PG-8A)).